The chain runs to 85 residues: Large ribosomal subunit protein bL27 (85 aa).

Residues 1–20 (MAHKKAGGSTRNGRDSEAKR) form a disordered region.

It belongs to the bacterial ribosomal protein bL27 family.

The chain is Large ribosomal subunit protein bL27 from Salmonella agona (strain SL483).